Consider the following 898-residue polypeptide: Serine/threonine-protein kinase PKH3 (898 aa).

The 283-residue stretch at 11 to 293 (FIFKEELGHG…LEQIKRHPYF (283 aa)) folds into the Protein kinase domain. ATP-binding positions include 17-25 (LGHGSYSTV) and lysine 41. The active-site Proton acceptor is aspartate 138. 2 disordered regions span residues 435–484 (PPKV…PSTE) and 675–850 (DSKA…EKYS). Residues 459–468 (PLQTSSIPQK) show a composition bias toward polar residues. Residues 469-483 (LSTSSASSALSAPST) are compositionally biased toward low complexity. Phosphoserine is present on serine 696. Over residues 697–721 (IGNNVTTLSYTAKNGSQNNAPQNDN) the composition is skewed to polar residues. The span at 723 to 738 (GEEKPFRIPSSTKDRP) shows a compositional bias: basic and acidic residues. 3 stretches are compositionally biased toward polar residues: residues 740-758 (ANST…NNAG), 771-782 (SAPSTNTYTNGS), and 789-803 (RPST…NILT). Phosphoserine is present on serine 753. Positions 804 to 817 (SKKQGSSVFSPSSS) are enriched in low complexity. The segment covering 818–831 (TTKPQIKTTGYRQP) has biased composition (polar residues). Serine 871 bears the Phosphoserine mark.

The protein belongs to the protein kinase superfamily. Ser/Thr protein kinase family.

It carries out the reaction L-seryl-[protein] + ATP = O-phospho-L-seryl-[protein] + ADP + H(+). It catalyses the reaction L-threonyl-[protein] + ATP = O-phospho-L-threonyl-[protein] + ADP + H(+). Functionally, serine/threonine-protein kinase which may phosphorylate the same targets substrates as PKH1 and PKH2, 2 upstream activators of PKC1. This Saccharomyces cerevisiae (strain ATCC 204508 / S288c) (Baker's yeast) protein is Serine/threonine-protein kinase PKH3 (PKH3).